Here is a 143-residue protein sequence, read N- to C-terminus: Hemoglobin subunit alpha-1 (143 aa).

Ser-2 bears the N-acetylserine mark. The Globin domain maps to 2-143 (SLSAKDKATV…LALALCEKYR (142 aa)). His-60 serves as a coordination point for O2. His-89 contributes to the heme b binding site.

Belongs to the globin family. As to quaternary structure, hb 1 is a heterotetramer of two alpha-1 and two beta-1 chains. As to expression, red blood cells.

Its function is as follows. Involved in oxygen transport from gills to the various peripheral tissues. The sequence is that of Hemoglobin subunit alpha-1 (hba1) from Boreogadus saida (Polar cod).